We begin with the raw amino-acid sequence, 641 residues long: Isomalto-dextranase (641 aa).

Positions 1–39 form a signal peptide, tat-type signal; that stretch reads MMNLSRRTLLTTGSAATLAYALGMAGSAQAATAVTARPG. Asp-227 (nucleophile) is an active-site residue. The active-site Proton donor is Asp-288. One can recognise a CBM6 domain in the interval 500–640; the sequence is TRYPAAFAAW…AINLNWIELD (141 aa). The tract at residues 556-588 is disordered; the sequence is SGYRYANATDDNTTSKTTTKKANPEKADRSTVD. Low complexity predominate over residues 561-576; sequence ANATDDNTTSKTTTKK. Basic and acidic residues predominate over residues 577–586; sequence ANPEKADRST.

This sequence belongs to the glycosyl hydrolase 27 family. Post-translationally, predicted to be exported by the Tat system. The position of the signal peptide cleavage has been experimentally proven.

The protein localises to the secreted. The enzyme catalyses Hydrolysis of (1-&gt;6)-alpha-D-glucosidic linkages in polysaccharides, to remove successive isomaltose units from the non-reducing ends of the chains.. The polypeptide is Isomalto-dextranase (imd) (Arthrobacter globiformis).